The following is a 315-amino-acid chain: 4-diphosphocytidyl-2-C-methyl-D-erythritol kinase (315 aa).

K10 is an active-site residue. P107 to A117 contributes to the ATP binding site. The active site involves D148. Positions H292–E315 are disordered.

It belongs to the GHMP kinase family. IspE subfamily.

It catalyses the reaction 4-CDP-2-C-methyl-D-erythritol + ATP = 4-CDP-2-C-methyl-D-erythritol 2-phosphate + ADP + H(+). It functions in the pathway isoprenoid biosynthesis; isopentenyl diphosphate biosynthesis via DXP pathway; isopentenyl diphosphate from 1-deoxy-D-xylulose 5-phosphate: step 3/6. Its function is as follows. Catalyzes the phosphorylation of the position 2 hydroxy group of 4-diphosphocytidyl-2C-methyl-D-erythritol. The chain is 4-diphosphocytidyl-2-C-methyl-D-erythritol kinase from Corynebacterium efficiens (strain DSM 44549 / YS-314 / AJ 12310 / JCM 11189 / NBRC 100395).